Reading from the N-terminus, the 334-residue chain is ELMO domain-containing protein 1 (334 aa).

One can recognise an ELMO domain in the interval 133–314 (QHEEMLLKLW…KFRKRIIKQL (182 aa)).

Acts as a GTPase-activating protein (GAP) toward guanine nucleotide exchange factors like ARL2, ARL3, ARF1 and ARF6, but not for GTPases outside the Arf family. The sequence is that of ELMO domain-containing protein 1 (ELMOD1) from Homo sapiens (Human).